The following is a 334-amino-acid chain: Geranylgeranyl pyrophosphate synthase idtG (334 aa).

3 residues coordinate isopentenyl diphosphate: Lys49, Arg52, and His81. Residues Asp88 and Asp92 each contribute to the Mg(2+) site. Arg97 serves as a coordination point for dimethylallyl diphosphate. Arg98 contributes to the isopentenyl diphosphate binding site. The dimethylallyl diphosphate site is built by Lys175, Thr176, and Gln209. Asp212 contacts Mg(2+). The dimethylallyl diphosphate site is built by Asn216, Lys226, and Lys236.

This sequence belongs to the FPP/GGPP synthase family. Requires Mg(2+) as cofactor.

It catalyses the reaction isopentenyl diphosphate + dimethylallyl diphosphate = (2E)-geranyl diphosphate + diphosphate. The enzyme catalyses isopentenyl diphosphate + (2E)-geranyl diphosphate = (2E,6E)-farnesyl diphosphate + diphosphate. It carries out the reaction isopentenyl diphosphate + (2E,6E)-farnesyl diphosphate = (2E,6E,10E)-geranylgeranyl diphosphate + diphosphate. The protein operates within secondary metabolite biosynthesis. Its function is as follows. Geranylgeranyl pyrophosphate synthase; part of the gene cluster that mediates the biosynthesis of paspalitrems, indole-diterpene (IDT) mycotoxins that are potent tremorgens in mammals. The geranylgeranyl diphosphate (GGPP) synthase idtG is proposed to catalyze the first step in IDT biosynthesis via catalysis of a series of iterative condensations of isopentenyl diphosphate (IPP) with dimethylallyl diphosphate (DMAPP), geranyl diphosphate (GPP), and farnesyl diphosphate (FPP), to form GGPP. Condensation of indole-3-glycerol phosphate with GGPP by the prenyltransferase idtC then forms 3-geranylgeranylindole (3-GGI). Epoxidation of the two terminal alkenes of the geranylgeranyl moiety by the FAD-dependent monooxygenase idtM, and cyclization by the terpene cyclase idtB then leads to the production of paspaline. The cytochrome P450 monooxygenase idtP then catalyzes oxidative elimination of the pendant methyl group at C-12 of paspaline and generates the C-10 ketone to yield 13-desoxypaxilline. The cytochrome P450 monooxygenase idtQ may catalyze the C-13 oxidation of 13-desoxypaxilline to afford paxilline. Considering that both paspalicine and paxilline were detected in C.paspali, idtQ also catalyzes the formation of paspalinine from 13-desoxypaxilline via paspalicine as an intermediate. Finally, the alpha-prenyltransferase idtF prenylates paspalinine at the C-20 or the C-21 positions to yield paspalitrems A and C, respectively. The hydroxylation of paspalitrem A at C-32 by a still unknown oxidase affords paspalitrem B. The protein is Geranylgeranyl pyrophosphate synthase idtG of Claviceps paspali (Rye ergot fungus).